The primary structure comprises 115 residues: Type 3 secretion system chaperone PscG (115 aa).

This sequence belongs to the YscG family. Forms a stable heterotrimeric complex with PscE and PscF/SctF in the cytoplasm. Co-stabilized by PscE.

It localises to the cytoplasm. Its function is as follows. Chaperone of the type III secretion system (T3SS), also called injectisome, which is used to inject bacterial effector proteins into eukaryotic host cells, facilitating the establishment and dissemination of infection. Along with PscE, prevents premature polymerization of the PscF/SctF needle protein within the cytoplasm. Required for type III secretion needle assembly. Also required for cytotoxicity by influencing PscF/SctF levels. The sequence is that of Type 3 secretion system chaperone PscG (pscG) from Pseudomonas aeruginosa (strain ATCC 15692 / DSM 22644 / CIP 104116 / JCM 14847 / LMG 12228 / 1C / PRS 101 / PAO1).